Reading from the N-terminus, the 3432-residue chain is Genome polyprotein (3432 aa).

Positions 2–15 (TKKPGGPGKNRAIN) are interaction with host EXOC1. Over 2-109 (TKKPGGPGKN…RKQNKRGGNE (108 aa)) the chain is Cytoplasmic. The hydrophobic; homodimerization of capsid protein C stretch occupies residues 37-72 (LLDGRGPVRFVLALITFFKFTALAPTKALLGRWKAV). A propeptide spans 106–127 (GGNEGSIMWLASLAVVIACAGA) (ER anchor for the capsid protein C, removed in mature form by serine protease NS3). Residues 110–130 (GSIMWLASLAVVIACAGAMKL) form a helical membrane-spanning segment. Topologically, residues 131 to 253 (SNFQGKLLMT…ATRYLMKTEN (123 aa)) are extracellular. Asparagine 142 carries N-linked (GlcNAc...) asparagine; by host glycosylation. A helical membrane pass occupies residues 254-274 (WIIRNPGYAFLAAVLGWMLGS). Residues 275 to 279 (NNGQR) lie on the Cytoplasmic side of the membrane. Residues 280 to 294 (VVFTILLLLVAPAYS) form a helical membrane-spanning segment. Residues 295–746 (FNCLGMGNRD…QVFGGAFRTL (452 aa)) are Extracellular-facing. Disulfide bonds link cysteine 297-cysteine 324, cysteine 354-cysteine 410, cysteine 354-cysteine 415, cysteine 368-cysteine 399, cysteine 386-cysteine 410, and cysteine 386-cysteine 415. The interval 392–405 (DRGWGNGCGLFGKG) is fusion peptide. Asparagine 448 carries N-linked (GlcNAc...) asparagine; by host glycosylation. Disulfide bonds link cysteine 484–cysteine 581 and cysteine 598–cysteine 629. A helical membrane pass occupies residues 747–767 (FGGMSWITQGLMGALLLWMGV). The Cytoplasmic segment spans residues 768 to 773 (NARDRS). Residues 774 to 794 (IALAFLATGGVLVFLATNVHA) form a helical membrane-spanning segment. Topologically, residues 795 to 1219 (DTGCAIDITR…AFAEANSGGD (425 aa)) are extracellular. 6 disulfides stabilise this stretch: cysteine 798/cysteine 809, cysteine 849/cysteine 937, cysteine 973/cysteine 1017, cysteine 1074/cysteine 1123, cysteine 1085/cysteine 1106, and cysteine 1107/cysteine 1110. N-linked (GlcNAc...) asparagine; by host glycosylation is found at asparagine 924 and asparagine 1001. The helical transmembrane segment at 1220-1240 (VLHLALIAVFKIQPAFLVMNM) threads the bilayer. Residues 1241–1250 (LSTRWTNQEN) are Cytoplasmic-facing. Residues 1251 to 1271 (VVLVLGAAFFQLASVDLQIGV) form a helical membrane-spanning segment. Position 1272 (histidine 1272) is a topological domain, lumenal. The helical transmembrane segment at 1273–1293 (GILNAAAIAWMIVRAITFPTT) threads the bilayer. Topologically, residues 1294-1309 (SSVTMPVLALLTPGMR) are cytoplasmic. A helical membrane pass occupies residues 1310–1330 (ALYLDTYRIILLVIGICSLLH). The Lumenal portion of the chain corresponds to 1331-1341 (ERKKTMAKKKG). A helical transmembrane segment spans residues 1342-1362 (AVLLGLALTSTGWFSPTTIAA). The Cytoplasmic portion of the chain corresponds to 1363–1374 (GLMVCNPNKKRG). Residues 1375-1395 (WPATEFLSAVGLMFAIVGGLA) form a helical membrane-spanning segment. Topologically, residues 1396–1398 (ELD) are lumenal. A helical transmembrane segment spans residues 1399 to 1419 (IESMSIPFMLAGLMAVSYVVS). Residues 1420-1476 (GKATDMWLERAADISWEMDAAITGSSRRLDVKLDDDGDFHLIDDPGVPWKVWVLRMS) lie on the Cytoplasmic side of the membrane. Positions 1427–1466 (LERAADISWEMDAAITGSSRRLDVKLDDDGDFHLIDDPGV) are interacts with and activates NS3 protease. Residues 1477–1497 (CIGLAALTPWAIVPAAFGYWL) constitute an intramembrane region (helical). Residues 1498–2173 (TLKTTKRGGV…RMALEELPDA (676 aa)) are Cytoplasmic-facing. In terms of domain architecture, Peptidase S7 spans 1505-1682 (GGVFWDTPSP…DRQEEPVPEA (178 aa)). Active-site charge relay system; for serine protease NS3 activity residues include histidine 1555, aspartate 1579, and serine 1639. The Helicase ATP-binding domain occupies 1685-1841 (PNMLRKRQMT…DSNAPIHDLQ (157 aa)). Positions 1689-1692 (RKRQ) are important for RNA-binding. ATP is bound at residue 1698–1705 (LHPGSGKT). The short motif at 1789–1792 (DEAH) is the DEAH box element. Residues 1852–2017 (GYEWITEYAG…GLVAQLYGPE (166 aa)) enclose the Helicase C-terminal domain. Lysine 1893 bears the N6-acetyllysine; by host mark. Residues 1950–1972 (NPSPITSASAAQRRGRVGRNPNQ) form a disordered region. Residues 2168–2172 (EELPD) are regulates the ATPase activity of NS3 helicase. The helical transmembrane segment at 2174–2194 (LETITLIVAITVMTGGFFLLM) threads the bilayer. Topologically, residues 2195-2199 (MQRKG) are lumenal. The helical intramembrane region spans 2200 to 2220 (IGKMGLGALVLTLATFFLWAA). Position 2221 (glutamate 2221) is a topological domain, lumenal. The chain crosses the membrane as a helical span at residues 2222–2242 (VPGTKIAGTLLIALLLMVVLI). The Cytoplasmic portion of the chain corresponds to 2243–2257 (PEPEKQRSQTDNQLA). A helical transmembrane segment spans residues 2258–2278 (VFLICVLTVVGVVAANEYGML). Residues 2279-2311 (EKTKADLKSMFGGKTQASGLTGLPSMALDLRPA) are Lumenal-facing. The helical intramembrane region spans 2312 to 2332 (TAWALYGGSTVVLTPLLKHLI). Residues 2333-2368 (TSEYVTTSLASINSQAGSLFVLPRGVPFTDLDLTVG) are Lumenal-facing. A helical membrane pass occupies residues 2369–2389 (LVFLGCWGQITLTTFLTAMVL). At 2390–2444 (ATLHYGYMLPGWQAEALRAAQRRTAAGIMKNAVVDGMVATDVPELERTTPLMQKK) the chain is on the cytoplasmic side. A helical membrane pass occupies residues 2445–2465 (VGQVLLIGVSVAAFLVNPNVT). Over 2466-2469 (TVRE) the chain is Lumenal. Residues 2470–2490 (AGVLVTAATLTLWDNGASAVW) traverse the membrane as a helical segment. Residues 2491-3432 (NSTTATGLCH…DVLIQEDRVI (942 aa)) lie on the Cytoplasmic side of the membrane. An mRNA cap 0-1 NS5-type MT domain is found at 2528 to 2793 (GRPGGRTLGE…DVNLGSGTRA (266 aa)). Serine 2583 is a binding site for S-adenosyl-L-methionine. Serine 2583 is modified (phosphoserine). Catalysis depends on lysine 2588, which acts as the For 2'-O-MTase activity. S-adenosyl-L-methionine contacts are provided by glycine 2613, tryptophan 2614, threonine 2631, lysine 2632, aspartate 2658, and valine 2659. Aspartate 2673 serves as the catalytic For 2'-O-MTase activity. Residue isoleucine 2674 coordinates S-adenosyl-L-methionine. Catalysis depends on for 2'-O-MTase activity residues lysine 2709 and glutamate 2745. An S-adenosyl-L-methionine-binding site is contributed by tyrosine 2747. Zn(2+) contacts are provided by glutamate 2967, histidine 2971, cysteine 2976, and cysteine 2979. Residues 3057–3209 (GKMYADDTAG…KPLDDRFATA (153 aa)) enclose the RdRp catalytic domain. Zn(2+)-binding residues include histidine 3244, cysteine 3260, and cysteine 3379.

This sequence in the N-terminal section; belongs to the class I-like SAM-binding methyltransferase superfamily. mRNA cap 0-1 NS5-type methyltransferase family. As to quaternary structure, homodimer. Interacts (via N-terminus) with host EXOC1 (via C-terminus); this interaction results in EXOC1 degradation through the proteasome degradation pathway. Forms heterodimers with envelope protein E in the endoplasmic reticulum and Golgi. In terms of assembly, homodimer; in the endoplasmic reticulum and Golgi. Interacts with protein prM. Interacts with non-structural protein 1. Interacts with host HSPA5. As to quaternary structure, homodimer; Homohexamer when secreted. Interacts with envelope protein E. NS1 interacts with NS4B. Interacts with host complement protein CFH; this interaction leads to the degradation of C3. Interacts (via N-terminus) with serine protease NS3. In terms of assembly, forms a heterodimer with serine protease NS3. May form homooligomers. As to quaternary structure, forms a heterodimer with NS2B. Interacts with non-structural protein 2A (via N-terminus). Interacts with NS4B. Interacts with unphosphorylated RNA-directed RNA polymerase NS5; this interaction stimulates RNA-directed RNA polymerase NS5 guanylyltransferase activity. Interacts with host ILF2. Interacts with serine protease NS3. In terms of assembly, homodimer. Interacts with host STAT2; this interaction inhibits the phosphorylation of the latter, and, when all viral proteins are present (polyprotein), targets STAT2 for degradation. Interacts with serine protease NS3. It depends on Mn(2+) as a cofactor. The cofactor is Mg(2+). Post-translationally, specific enzymatic cleavages in vivo yield mature proteins. Cleavages in the lumen of endoplasmic reticulum are performed by host signal peptidase, whereas cleavages in the cytoplasmic side are performed by serine protease NS3. Signal cleavage at the 2K-4B site requires a prior NS3 protease-mediated cleavage at the 4A-2K site. Cleaved in post-Golgi vesicles by a host furin, releasing the mature small envelope protein M, and peptide pr. This cleavage is incomplete as up to 30% of viral particles still carry uncleaved prM. In terms of processing, N-glycosylated. Post-translationally, N-glycosylated. The excreted form is glycosylated and this is required for efficient secretion of the protein from infected cells. Acetylated by host KAT5. Acetylation modulates NS3 RNA-binding and unwinding activities and plays an important positive role for viral replication. In terms of processing, phosphorylated on serines residues. This phosphorylation may trigger NS5 nuclear localization.

Its subcellular location is the virion. It is found in the host nucleus. The protein resides in the host cytoplasm. It localises to the host perinuclear region. The protein localises to the secreted. Its subcellular location is the virion membrane. It is found in the host endoplasmic reticulum membrane. The protein resides in the host cell surface. It carries out the reaction Selective hydrolysis of -Xaa-Xaa-|-Yaa- bonds in which each of the Xaa can be either Arg or Lys and Yaa can be either Ser or Ala.. The enzyme catalyses RNA(n) + a ribonucleoside 5'-triphosphate = RNA(n+1) + diphosphate. The catalysed reaction is a ribonucleoside 5'-triphosphate + H2O = a ribonucleoside 5'-diphosphate + phosphate + H(+). It catalyses the reaction ATP + H2O = ADP + phosphate + H(+). It carries out the reaction a 5'-end (5'-triphosphoguanosine)-ribonucleoside in mRNA + S-adenosyl-L-methionine = a 5'-end (N(7)-methyl 5'-triphosphoguanosine)-ribonucleoside in mRNA + S-adenosyl-L-homocysteine. The enzyme catalyses a 5'-end (N(7)-methyl 5'-triphosphoguanosine)-ribonucleoside in mRNA + S-adenosyl-L-methionine = a 5'-end (N(7)-methyl 5'-triphosphoguanosine)-(2'-O-methyl-ribonucleoside) in mRNA + S-adenosyl-L-homocysteine + H(+). Functionally, plays a role in virus budding by binding to the cell membrane and gathering the viral RNA into a nucleocapsid that forms the core of a mature virus particle. During virus entry, may induce genome penetration into the host cytoplasm after hemifusion induced by the surface proteins. Can migrate to the cell nucleus where it modulates host functions. Overcomes the anti-viral effects of host EXOC1 by sequestering and degrading the latter through the proteasome degradation pathway. Its function is as follows. Inhibits RNA silencing by interfering with host Dicer. In terms of biological role, prevents premature fusion activity of envelope proteins in trans-Golgi by binding to envelope protein E at pH6.0. After virion release in extracellular space, gets dissociated from E dimers. Acts as a chaperone for envelope protein E during intracellular virion assembly by masking and inactivating envelope protein E fusion peptide. prM is the only viral peptide matured by host furin in the trans-Golgi network probably to avoid catastrophic activation of the viral fusion activity in acidic Golgi compartment prior to virion release. prM-E cleavage is inefficient, and many virions are only partially matured. These uncleaved prM would play a role in immune evasion. Functionally, may play a role in virus budding. Exerts cytotoxic effects by activating a mitochondrial apoptotic pathway through M ectodomain. May display a viroporin activity. Its function is as follows. Binds to host cell surface receptor and mediates fusion between viral and cellular membranes. Efficient virus attachment to cell is, at least in part, mediated by host HSPA5. Envelope protein is synthesized in the endoplasmic reticulum in the form of heterodimer with protein prM. They play a role in virion budding in the ER, and the newly formed immature particle is covered with 60 spikes composed of heterodimer between precursor prM and envelope protein E. The virion is transported to the Golgi apparatus where the low pH causes dissociation of PrM-E heterodimers and formation of E homodimers. prM-E cleavage is inefficient, and many virions are only partially matured. These uncleaved prM would play a role in immune evasion. In terms of biological role, involved in immune evasion, pathogenesis and viral replication. Once cleaved off the polyprotein, is targeted to three destinations: the viral replication cycle, the plasma membrane and the extracellular compartment. Essential for viral replication. Required for formation of the replication complex and recruitment of other non-structural proteins to the ER-derived membrane structures. Excreted as a hexameric lipoparticle that plays a role against host immune response. Antagonizing the complement function. Binds to the host macrophages and dendritic cells. Inhibits signal transduction originating from Toll-like receptor 3 (TLR3). Component of the viral RNA replication complex that functions in virion assembly and antagonizes the host alpha/beta interferon antiviral response. Functionally, required cofactor for the serine protease function of NS3. May have membrane-destabilizing activity and form viroporins. Its function is as follows. Displays three enzymatic activities: serine protease, NTPase and RNA helicase. NS3 serine protease, in association with NS2B, performs its autocleavage and cleaves the polyprotein at dibasic sites in the cytoplasm: C-prM, NS2A-NS2B, NS2B-NS3, NS3-NS4A, NS4A-2K and NS4B-NS5. NS3 RNA helicase binds RNA and unwinds dsRNA in the 3' to 5' direction. In terms of biological role, regulates the ATPase activity of the NS3 helicase activity. NS4A allows NS3 helicase to conserve energy during unwinding. Functions as a signal peptide for NS4B and is required for the interferon antagonism activity of the latter. Functionally, induces the formation of ER-derived membrane vesicles where the viral replication takes place. Inhibits interferon (IFN)-induced host STAT1 phosphorylation and nuclear translocation, thereby preventing the establishment of cellular antiviral state by blocking the IFN-alpha/beta pathway. Inhibits STAT2 translocation in the nucleus after IFN-alpha treatment. Its function is as follows. Replicates the viral (+) and (-) RNA genome. Performs the capping of genomes in the cytoplasm. NS5 methylates viral RNA cap at guanine N-7 and ribose 2'-O positions. Besides its role in RNA genome replication, also prevents the establishment of cellular antiviral state by blocking the interferon-alpha/beta (IFN-alpha/beta) signaling pathway. Inhibits host TYK2 and STAT2 phosphorylation, thereby preventing activation of JAK-STAT signaling pathway. This chain is Genome polyprotein, found in Ardeidae (herons).